Consider the following 625-residue polypeptide: DNA mismatch repair protein MutL (625 aa).

Belongs to the DNA mismatch repair MutL/HexB family.

Functionally, this protein is involved in the repair of mismatches in DNA. It is required for dam-dependent methyl-directed DNA mismatch repair. May act as a 'molecular matchmaker', a protein that promotes the formation of a stable complex between two or more DNA-binding proteins in an ATP-dependent manner without itself being part of a final effector complex. This is DNA mismatch repair protein MutL from Bacteroides fragilis (strain YCH46).